The sequence spans 398 residues: Cell division protein FtsZ (398 aa).

GTP contacts are provided by residues 21-25 (GGGGN), 108-110 (GTG), E139, R143, and D187.

It belongs to the FtsZ family. As to quaternary structure, homodimer. Polymerizes to form a dynamic ring structure in a strictly GTP-dependent manner. Interacts directly with several other division proteins.

The protein resides in the cytoplasm. Essential cell division protein that forms a contractile ring structure (Z ring) at the future cell division site. The regulation of the ring assembly controls the timing and the location of cell division. One of the functions of the FtsZ ring is to recruit other cell division proteins to the septum to produce a new cell wall between the dividing cells. Binds GTP and shows GTPase activity. In Pseudomonas putida (strain ATCC 47054 / DSM 6125 / CFBP 8728 / NCIMB 11950 / KT2440), this protein is Cell division protein FtsZ.